The sequence spans 444 residues: Phosphoglucosamine mutase (444 aa).

The Phosphoserine intermediate role is filled by Ser102. Mg(2+)-binding residues include Ser102, Asp241, Asp243, and Asp245. Ser102 bears the Phosphoserine mark.

It belongs to the phosphohexose mutase family. Mg(2+) is required as a cofactor. Post-translationally, activated by phosphorylation.

The enzyme catalyses alpha-D-glucosamine 1-phosphate = D-glucosamine 6-phosphate. In terms of biological role, catalyzes the conversion of glucosamine-6-phosphate to glucosamine-1-phosphate. The sequence is that of Phosphoglucosamine mutase from Acidovorax sp. (strain JS42).